Consider the following 334-residue polypeptide: MTNKNQSFGVGQDSMSSMTCLIHVLEAWFGVEHLEDYWNFANYLLWVFTPLLLLILPYFTIFLLYLTIIFLHIYKRKNVLKEAYSHNLWDGARKTVATLWDGHAAVWHGYEVHGMEKIPEEGPALIIFYHGAIPIDFYYFMAKIFIHKGRTCRVVADHFVFKIPGFSLLLDVFCAIHGPREKCVEILQSGHLLAISPGGVREALMSDETYNIVWGNRKGFAQVAIDAKVPIIPMFTQNIREGFRSLGGTRLFRWLYEKFRYPFAPMYGGFPVKLRTYLGDPIPYDPKITAEELAEKTKDAVQALIDKHQRIPGNIMSALLERFRNKQKINQKTL.

Over 1–50 the chain is Lumenal; it reads MTNKNQSFGVGQDSMSSMTCLIHVLEAWFGVEHLEDYWNFANYLLWVFTP. N-linked (GlcNAc...) asparagine glycosylation is present at N5. Residues 51–71 form a helical membrane-spanning segment; sequence LLLLILPYFTIFLLYLTIIFL. The Cytoplasmic portion of the chain corresponds to 72-125; it reads HIYKRKNVLKEAYSHNLWDGARKTVATLWDGHAAVWHGYEVHGMEKIPEEGPAL. A helical membrane pass occupies residues 126–146; the sequence is IIFYHGAIPIDFYYFMAKIFI. H130 is an active-site residue. Over 147 to 334 the chain is Lumenal; it reads HKGRTCRVVA…NKQKINQKTL (188 aa).

This sequence belongs to the diacylglycerol acyltransferase family. Highly divergent.

Its subcellular location is the endoplasmic reticulum membrane. The catalysed reaction is a 1,2-diacylglycerol + a 1,2-diacyl-sn-glycero-3-phosphocholine = a triacylglycerol + a 1-acyl-sn-glycero-3-phosphocholine. It catalyses the reaction a 1-O-alkyl-2-acyl-sn-glycero-3-phosphocholine + a 1,2-diacylglycerol = a 1-O-alkyl-sn-glycero-3-phosphocholine + a triacylglycerol. It carries out the reaction a 2-acylglycerol + an acyl-CoA = a 1,2-diacylglycerol + CoA. The enzyme catalyses an acyl-CoA + a 1,2-diacyl-sn-glycerol = a triacyl-sn-glycerol + CoA. The catalysed reaction is 2-(9Z-octadecenoyl)-glycerol + (9Z)-octadecenoyl-CoA = 1,2-di-(9Z-octadecenoyl)-glycerol + CoA. It catalyses the reaction 1,2-di-(9Z-octadecenoyl)-sn-glycerol + (9Z)-octadecenoyl-CoA = 1,2,3-tri-(9Z-octadecenoyl)-glycerol + CoA. Its activity is regulated as follows. Acyltransferase activity is specifically inhibited by TMX1 at the endoplasmic reticulum, restricting accumulation of triacylglycerol. In terms of biological role, catalytic subunit of the alternative triglyceride biosynthesis pathway, which mediates formation of triacylglycerol from diacylglycerol and membrane phospholipids. Synthesizes triacylglycerol at the expense of membrane phospholipids, such as phosphatidylcholine (PC) and its ether-linked form (ePC), thereby altering the composition of membranes. The alternative triglyceride biosynthesis pathway is probably required to provide the energy required for rapid growth when fuel sources are limiting. It maintains mitochondrial function during periods of extracellular lipid starvation. Can also use acyl-CoA as donor: acts as a acyl-CoA:monoacylglycerol acyltransferase (MGAT), but also shows acyl-CoA:diacylglycerol acyltransferase (DGAT) activity. The protein is DGAT1/2-independent enzyme synthesizing storage lipids (TMEM68) of Bos taurus (Bovine).